The primary structure comprises 25 residues: GVWSTVLGGLKKFAKGGLEAIVNPK.

Expressed by the skin glands.

Its subcellular location is the secreted. Its function is as follows. Has very strong antibacterial activity against Gram-positive bacterium S.aureus and very weak activity against Gram-negative bacterium E.coli. The chain is Antimicrobial peptide 2 from Xenopus tropicalis (Western clawed frog).